The following is a 78-amino-acid chain: MSTAFRKIKLIFKKSDSQYPQNYRAEIKSRNKNTVITRHDLLIAHEMKQRASLERSNSIRNLQSQGKRRSDSKESRKL.

The segment at 49–78 is disordered; that stretch reads QRASLERSNSIRNLQSQGKRRSDSKESRKL. Over residues 54–65 the composition is skewed to polar residues; that stretch reads ERSNSIRNLQSQ. Over residues 68-78 the composition is skewed to basic and acidic residues; that stretch reads RRSDSKESRKL.

This is an uncharacterized protein from Saccharomyces cerevisiae (strain ATCC 204508 / S288c) (Baker's yeast).